Consider the following 195-residue polypeptide: Segregation and condensation protein B (195 aa).

Belongs to the ScpB family. As to quaternary structure, homodimer. Homodimerization may be required to stabilize the binding of ScpA to the Smc head domains. Component of a cohesin-like complex composed of ScpA, ScpB and the Smc homodimer, in which ScpA and ScpB bind to the head domain of Smc. The presence of the three proteins is required for the association of the complex with DNA.

It is found in the cytoplasm. In terms of biological role, participates in chromosomal partition during cell division. May act via the formation of a condensin-like complex containing Smc and ScpA that pull DNA away from mid-cell into both cell halves. The protein is Segregation and condensation protein B of Clostridium perfringens (strain ATCC 13124 / DSM 756 / JCM 1290 / NCIMB 6125 / NCTC 8237 / Type A).